We begin with the raw amino-acid sequence, 345 residues long: MYESANVSDDADRTAFRRAEKKYKLYYEQDSKFSRKKKLPKPIDLSELLDFNLISQNFNNDGVLPDGIRVSKVDSSPVFCIDNRPGFYFIPDALSLKEQCKWIKESLTSFPQPPNRTNHNAIYGPIDDLFDSAKENKVLVQDDLTNNKWKFYEEVDIEKATRSSCKSVSASVLLRKLRWSTLGLQFDWSKRNYDVSLPHNNIPDALCQLAKTHAAIAMPDGEEFRPEGAIVNYFGIGDTLGGHLDDMEADWSKPIVSMSLGCKAIFLLGGKSKDDPPHAMYLRSGDVVLMAGEARECFHGIPRIFTGEENADIGALESELSHESGHFFAEYIKTSRININIRQVF.

Substrate is bound by residues Trp179 and 186 to 188 (FDW). One can recognise a Fe2OG dioxygenase domain in the interval 225-345 (RPEGAIVNYF…RININIRQVF (121 aa)). 232–234 (NYF) contributes to the 2-oxoglutarate binding site. Fe cation-binding residues include His243, Asp245, and His299. 336 to 342 (RININIR) provides a ligand contact to 2-oxoglutarate.

Belongs to the alkB family. The cofactor is Fe(2+). Mostly expressed in siliques, to a lower extent in roots, seedlings and rosette leaves, but barely in cauline leaves, stems and flowers.

The protein localises to the nucleus. The protein resides in the cytoplasm. The enzyme catalyses an N(6)-methyl-2'-deoxyadenosine in DNA + 2-oxoglutarate + O2 = a 2'-deoxyadenosine in DNA + formaldehyde + succinate + CO2. Functionally, dioxygenase that catalyzes DNA N(6)-methyladenine (6 mA) demethylation to modulate gene expression and regulate seed germination. The sequence is that of DNA N(6)-methyladenine demethylase ALKBH1A from Arabidopsis thaliana (Mouse-ear cress).